We begin with the raw amino-acid sequence, 248 residues long: Pyridoxine 5'-phosphate synthase (248 aa).

Asparagine 12 is a 3-amino-2-oxopropyl phosphate binding site. 1-deoxy-D-xylulose 5-phosphate is bound at residue 14-15; sequence DH. Position 23 (arginine 23) interacts with 3-amino-2-oxopropyl phosphate. Histidine 48 serves as the catalytic Proton acceptor. Residues arginine 50 and histidine 55 each coordinate 1-deoxy-D-xylulose 5-phosphate. Glutamate 75 functions as the Proton acceptor in the catalytic mechanism. Threonine 105 lines the 1-deoxy-D-xylulose 5-phosphate pocket. Histidine 196 serves as the catalytic Proton donor. 3-amino-2-oxopropyl phosphate contacts are provided by residues glycine 197 and 218-219; that span reads GH.

Belongs to the PNP synthase family. As to quaternary structure, homooctamer; tetramer of dimers.

Its subcellular location is the cytoplasm. It catalyses the reaction 3-amino-2-oxopropyl phosphate + 1-deoxy-D-xylulose 5-phosphate = pyridoxine 5'-phosphate + phosphate + 2 H2O + H(+). It participates in cofactor biosynthesis; pyridoxine 5'-phosphate biosynthesis; pyridoxine 5'-phosphate from D-erythrose 4-phosphate: step 5/5. Functionally, catalyzes the complicated ring closure reaction between the two acyclic compounds 1-deoxy-D-xylulose-5-phosphate (DXP) and 3-amino-2-oxopropyl phosphate (1-amino-acetone-3-phosphate or AAP) to form pyridoxine 5'-phosphate (PNP) and inorganic phosphate. This Stutzerimonas stutzeri (strain A1501) (Pseudomonas stutzeri) protein is Pyridoxine 5'-phosphate synthase.